Reading from the N-terminus, the 334-residue chain is Serpentine receptor class alpha-11 (334 aa).

The Extracellular segment spans residues 1–23; that stretch reads MTTNNPVCASDAHMEMYSSKLYT. The chain crosses the membrane as a helical span at residues 24–44; the sequence is SALFLNLIIATTSMILTGFAI. Residues 45–57 are Cytoplasmic-facing; the sequence is QKLFMESIINIST. Residues 58 to 80 traverse the membrane as a helical segment; that stretch reads RMFLFCGLMCCSLHQTAYIVLRI. Residues 81–105 are Extracellular-facing; the sequence is QVIYQVFFKLSEPCNLYYPAIDCKY. The chain crosses the membrane as a helical span at residues 106-126; that stretch reads VTFSLVAGNTGMIFIQSAMTI. Residues 127–145 lie on the Cytoplasmic side of the membrane; that stretch reads DRIFATIFPKLWPKLKYWP. The helical transmembrane segment at 146-166 threads the bilayer; sequence GVVLSILMIACNYANVQIIFW. The Extracellular segment spans residues 167–191; that stretch reads GDPLTEYVPTCGQFPSKSVNRFQTF. The helical transmembrane segment at 192–212 threads the bilayer; the sequence is LAIALYMSIAHMVINVIILYI. At 213–239 the chain is on the cytoplasmic side; that stretch reads NVLQDRQQSKSFNVNQRYQSREALKSS. The helical transmembrane segment at 240-260 threads the bilayer; the sequence is QAIFFLSMSQFFACLIYSVFT. Residues 261–277 lie on the Extracellular side of the membrane; sequence KVFLEFQLNLSPLQSGL. The helical transmembrane segment at 278-298 threads the bilayer; the sequence is VLALSYTTPYACIAIPSLIIF. Residues 299 to 334 lie on the Cytoplasmic side of the membrane; the sequence is TFRFIKNQRLRNINELRSQTETGDECMRKIAKIWEK.

It belongs to the nematode receptor-like protein sra family. Expressed in interneurons AIY and AVB in L1 larvae. In adults, strong expression is seen in AIY and AIA but only weak expression in AVB.

It localises to the membrane. Functionally, a G protein-coupled receptor required for olfactory imprinting a requisite in ordorant response such as benzaldehyde and isoamylalcohol. This Caenorhabditis elegans protein is Serpentine receptor class alpha-11 (sra-11).